A 273-amino-acid chain; its full sequence is MATDHAAPTASEYIVHHLGHFSTKHQDKIVDFSIINMDTIFWSIFAGVVGCLFMYLAARKATSGVPGRFQAAVEMIVEMVDNQAKSIVHGDRTFIAPLALTVFVWVALMNSLDFLPVDMFSAFFHAVGLDSLITHHRVVPTADLNGTMGIALGVFALMIFYNIKIKGAGGFVHELFAAPFGIWLAPFNLLLNMIEFAAKTVSLAMRLFGNMYAGELLFLLIALLGSTATAFGFFGHVVAGTLWAIFHILIVFLQAFIFMMLTLVYIGQAHESH.

7 consecutive transmembrane segments (helical) span residues 34–54 (IINM…CLFM), 94–114 (FIAP…SLDF), 115–135 (LPVD…LITH), 143–163 (DLNG…FYNI), 171–191 (FVHE…NLLL), 218–238 (FLLI…GHVV), and 244–264 (AIFH…LTLV).

The protein belongs to the ATPase A chain family. F-type ATPases have 2 components, CF(1) - the catalytic core - and CF(0) - the membrane proton channel. CF(1) has five subunits: alpha(3), beta(3), gamma(1), delta(1), epsilon(1). CF(0) has three main subunits: a(1), b(2) and c(9-12). The alpha and beta chains form an alternating ring which encloses part of the gamma chain. CF(1) is attached to CF(0) by a central stalk formed by the gamma and epsilon chains, while a peripheral stalk is formed by the delta and b chains.

The protein resides in the cell inner membrane. Functionally, key component of the proton channel; it plays a direct role in the translocation of protons across the membrane. The polypeptide is ATP synthase subunit a (Janthinobacterium sp. (strain Marseille) (Minibacterium massiliensis)).